Reading from the N-terminus, the 305-residue chain is Glycine--tRNA ligase alpha subunit (305 aa).

Belongs to the class-II aminoacyl-tRNA synthetase family. As to quaternary structure, tetramer of two alpha and two beta subunits.

The protein localises to the cytoplasm. It carries out the reaction tRNA(Gly) + glycine + ATP = glycyl-tRNA(Gly) + AMP + diphosphate. The chain is Glycine--tRNA ligase alpha subunit from Streptococcus pneumoniae (strain ATCC BAA-255 / R6).